The primary structure comprises 161 residues: MIIMGLDPGIAACGYGIIHAKGTKLECLACGVLRTYSDESATKRLESIYQGVSNLISEFSPNTVAVESLFFAKNSKTAMKVGQAKGVLMLAAAHNNLEIFEYTPLQVKQGVCGYGSASKEQVQKMVKQILSLDKIPKPDDAADALAVSLCHSQAYRLRTRL.

Active-site residues include Asp-7, Glu-67, and Asp-140. Positions 7, 67, and 140 each coordinate Mg(2+).

The protein belongs to the RuvC family. As to quaternary structure, homodimer which binds Holliday junction (HJ) DNA. The HJ becomes 2-fold symmetrical on binding to RuvC with unstacked arms; it has a different conformation from HJ DNA in complex with RuvA. In the full resolvosome a probable DNA-RuvA(4)-RuvB(12)-RuvC(2) complex forms which resolves the HJ. Mg(2+) is required as a cofactor.

The protein localises to the cytoplasm. It carries out the reaction Endonucleolytic cleavage at a junction such as a reciprocal single-stranded crossover between two homologous DNA duplexes (Holliday junction).. Functionally, the RuvA-RuvB-RuvC complex processes Holliday junction (HJ) DNA during genetic recombination and DNA repair. Endonuclease that resolves HJ intermediates. Cleaves cruciform DNA by making single-stranded nicks across the HJ at symmetrical positions within the homologous arms, yielding a 5'-phosphate and a 3'-hydroxyl group; requires a central core of homology in the junction. The consensus cleavage sequence is 5'-(A/T)TT(C/G)-3'. Cleavage occurs on the 3'-side of the TT dinucleotide at the point of strand exchange. HJ branch migration catalyzed by RuvA-RuvB allows RuvC to scan DNA until it finds its consensus sequence, where it cleaves and resolves the cruciform DNA. The protein is Crossover junction endodeoxyribonuclease RuvC of Natranaerobius thermophilus (strain ATCC BAA-1301 / DSM 18059 / JW/NM-WN-LF).